The sequence spans 504 residues: Glycine--tRNA ligase (504 aa).

Arginine 99 and glutamate 189 together coordinate substrate. ATP is bound by residues 221–223 (RNE), 231–236 (FRVREL), 306–307 (EI), and 365–368 (GVDR). Position 236–240 (236–240 (LEQME)) interacts with substrate. 361-365 (EPSAG) provides a ligand contact to substrate.

It belongs to the class-II aminoacyl-tRNA synthetase family. In terms of assembly, homodimer.

It localises to the cytoplasm. It carries out the reaction tRNA(Gly) + glycine + ATP = glycyl-tRNA(Gly) + AMP + diphosphate. Catalyzes the attachment of glycine to tRNA(Gly). This is Glycine--tRNA ligase from Deinococcus geothermalis (strain DSM 11300 / CIP 105573 / AG-3a).